Consider the following 716-residue polypeptide: Fatty acid oxidation complex subunit alpha (716 aa).

Positions 1 to 189 (MIYQSPTIQV…KVGAIDAVVA (189 aa)) are enoyl-CoA hydratase/isomerase. Residue Asp296 participates in substrate binding. Residues 311–716 (KNIDTAAVLG…AANNGSYYQS (406 aa)) form a 3-hydroxyacyl-CoA dehydrogenase region. NAD(+)-binding positions include Met324, Asp343, 400 to 402 (VVE), Lys407, and Ser429. Catalysis depends on His450, which acts as the For 3-hydroxyacyl-CoA dehydrogenase activity. Asn453 contributes to the NAD(+) binding site. Position 500 (Asn500) interacts with substrate.

It in the N-terminal section; belongs to the enoyl-CoA hydratase/isomerase family. The protein in the C-terminal section; belongs to the 3-hydroxyacyl-CoA dehydrogenase family. As to quaternary structure, heterotetramer of two alpha chains (FadB) and two beta chains (FadA).

The enzyme catalyses a (3S)-3-hydroxyacyl-CoA + NAD(+) = a 3-oxoacyl-CoA + NADH + H(+). It catalyses the reaction a (3S)-3-hydroxyacyl-CoA = a (2E)-enoyl-CoA + H2O. It carries out the reaction a 4-saturated-(3S)-3-hydroxyacyl-CoA = a (3E)-enoyl-CoA + H2O. The catalysed reaction is (3S)-3-hydroxybutanoyl-CoA = (3R)-3-hydroxybutanoyl-CoA. The enzyme catalyses a (3Z)-enoyl-CoA = a 4-saturated (2E)-enoyl-CoA. It catalyses the reaction a (3E)-enoyl-CoA = a 4-saturated (2E)-enoyl-CoA. Its pathway is lipid metabolism; fatty acid beta-oxidation. Its function is as follows. Involved in the aerobic and anaerobic degradation of long-chain fatty acids via beta-oxidation cycle. Catalyzes the formation of 3-oxoacyl-CoA from enoyl-CoA via L-3-hydroxyacyl-CoA. It can also use D-3-hydroxyacyl-CoA and cis-3-enoyl-CoA as substrate. The polypeptide is Fatty acid oxidation complex subunit alpha (Shewanella sediminis (strain HAW-EB3)).